The sequence spans 843 residues: DNA-directed RNA polymerase subunit beta' (843 aa).

Zn(2+) is bound by residues cysteine 70, cysteine 72, cysteine 85, and cysteine 88. Mg(2+) is bound by residues aspartate 686, aspartate 688, and aspartate 690.

This sequence belongs to the RNA polymerase beta' chain family. RpoC1 subfamily. As to quaternary structure, in plastids the minimal PEP RNA polymerase catalytic core is composed of four subunits: alpha, beta, beta', and beta''. When a (nuclear-encoded) sigma factor is associated with the core the holoenzyme is formed, which can initiate transcription. Requires Mg(2+) as cofactor. Zn(2+) serves as cofactor.

The protein resides in the plastid. It localises to the chloroplast. It catalyses the reaction RNA(n) + a ribonucleoside 5'-triphosphate = RNA(n+1) + diphosphate. Functionally, DNA-dependent RNA polymerase catalyzes the transcription of DNA into RNA using the four ribonucleoside triphosphates as substrates. This chain is DNA-directed RNA polymerase subunit beta', found in Trieres chinensis (Marine centric diatom).